Consider the following 70-residue polypeptide: Cytochrome c oxidase subunit 8B, mitochondrial (70 aa).

Residues 1–24 (MLSLRPALRLLQAPLRCWAVPKAH) constitute a mitochondrion transit peptide. Over 25 to 35 (VSAKPAETPTS) the chain is Mitochondrial matrix. The chain crosses the membrane as a helical span at residues 36-59 (PAEQAVGLSFIFITFLGPAGWILS). Residues 60–70 (HVENYKKRPRA) are Mitochondrial intermembrane-facing.

This sequence belongs to the cytochrome c oxidase VIII family. As to quaternary structure, component of the cytochrome c oxidase (complex IV, CIV), a multisubunit enzyme composed of 14 subunits. The complex is composed of a catalytic core of 3 subunits MT-CO1, MT-CO2 and MT-CO3, encoded in the mitochondrial DNA, and 11 supernumerary subunits COX4I, COX5A, COX5B, COX6A, COX6B, COX6C, COX7A, COX7B, COX7C, COX8 and NDUFA4, which are encoded in the nuclear genome. The complex exists as a monomer or a dimer and forms supercomplexes (SCs) in the inner mitochondrial membrane with NADH-ubiquinone oxidoreductase (complex I, CI) and ubiquinol-cytochrome c oxidoreductase (cytochrome b-c1 complex, complex III, CIII), resulting in different assemblies (supercomplex SCI(1)III(2)IV(1) and megacomplex MCI(2)III(2)IV(2)).

Its subcellular location is the mitochondrion inner membrane. It participates in energy metabolism; oxidative phosphorylation. Functionally, component of the cytochrome c oxidase, the last enzyme in the mitochondrial electron transport chain which drives oxidative phosphorylation. The respiratory chain contains 3 multisubunit complexes succinate dehydrogenase (complex II, CII), ubiquinol-cytochrome c oxidoreductase (cytochrome b-c1 complex, complex III, CIII) and cytochrome c oxidase (complex IV, CIV), that cooperate to transfer electrons derived from NADH and succinate to molecular oxygen, creating an electrochemical gradient over the inner membrane that drives transmembrane transport and the ATP synthase. Cytochrome c oxidase is the component of the respiratory chain that catalyzes the reduction of oxygen to water. Electrons originating from reduced cytochrome c in the intermembrane space (IMS) are transferred via the dinuclear copper A center (CU(A)) of subunit 2 and heme A of subunit 1 to the active site in subunit 1, a binuclear center (BNC) formed by heme A3 and copper B (CU(B)). The BNC reduces molecular oxygen to 2 water molecules using 4 electrons from cytochrome c in the IMS and 4 protons from the mitochondrial matrix. The sequence is that of Cytochrome c oxidase subunit 8B, mitochondrial (COX8B) from Ateles belzebuth (White-bellied spider monkey).